The primary structure comprises 300 residues: Pleckstrin homology domain-containing family A member 3 (300 aa).

One can recognise a PH domain in the interval 1-93 (MEGVLYKWTN…WLVALGSSKA (93 aa)). Residues 1–100 (MEGVLYKWTN…SKACLTDTRT (100 aa)) form an interaction with SACM1L region. An interaction with VAPA and VAPB region spans residues 97-300 (DTRTKKEKEI…SEDTLPSFSS (204 aa)). Positions 197–300 (PVSPSPVQMM…SEDTLPSFSS (104 aa)) are disordered. Residues serine 236 and serine 244 each carry the phosphoserine modification. The span at 279–290 (EESRLMAKKQSE) shows a compositional bias: basic and acidic residues.

As to quaternary structure, interacts with GTP-bound ARF1. Interacts with SACM1L and VAPA and/or VAPB to form a ternary complex. As to expression, widely expressed.

The protein localises to the golgi apparatus. The protein resides in the trans-Golgi network membrane. Its function is as follows. Plays a role in regulation of vesicular cargo transport from the trans-Golgi network (TGN) to the plasma membrane. Regulates Golgi phosphatidylinositol 4-phosphate (PtdIns(4)P) levels and activates the PtdIns(4)P phosphatase activity of SACM1L when it binds PtdIns(4)P in 'trans' configuration. Binds preferentially to PtdIns(4)P. Negatively regulates APOB secretion from hepatocytes. This is Pleckstrin homology domain-containing family A member 3 (PLEKHA3) from Homo sapiens (Human).